The following is a 142-amino-acid chain: MGASSLPPAWQLYLKDHRISTFKNWPFLEGCACTPERMAEAGFIHCPTENEPDLAQCFFCFKELEGWEPDDDPIEEHKKHSSGCAFLSVKKQFEELTLSEFLKLDKERAKNKIAKETNHKQKEFEETAKRVRCAIEQLAALE.

Residues 18 to 88 form a BIR repeat; it reads RISTFKNWPF…KHSSGCAFLS (71 aa). A Phosphoserine; by AURKC modification is found at serine 20. At lysine 23 the chain carries N6-acetyllysine. Threonine 34 carries the post-translational modification Phosphothreonine; by CDK1 and CDK15. Threonine 48 bears the Phosphothreonine mark. Positions 57, 60, 77, and 84 each coordinate Zn(2+). An N6-acetyllysine mark is found at lysine 90, lysine 110, lysine 112, and lysine 115. The residue at position 117 (threonine 117) is a Phosphothreonine; by AURKB. At lysine 129 the chain carries N6-acetyllysine.

It belongs to the IAP family. Monomer or homodimer. Exists as a homodimer in the apo state and as a monomer in the CPC-bound state. The monomer protects cells against apoptosis more efficiently than the dimer. Only the dimeric form is capable of enhancing tubulin stability in cells. When phosphorylated, interacts with LAMTOR5/HBXIP; the resulting complex binds pro-CASP9, as well as active CASP9, but much less efficiently. Component of the chromosomal passenger complex (CPC) composed of at least BIRC5/survivin, CDCA8/borealin, INCENP, AURKB or AURKC; in the complex forms a triple-helix bundle-based subcomplex with INCENP and CDCA8. Interacts with JTB. Interacts (via BIR domain) with histone H3 phosphorylated at 'Thr-3' (H3pT3). Interacts with EVI5. Interacts with GTP-bound RAN in both the S and M phases of the cell cycle. Interacts with USP9X. Interacts with tubulin. Interacts with BIRC2/c-IAP1. The acetylated form at Lys-129 interacts with STAT3. The monomeric form deacetylated at Lys-129 interacts with XPO1/CRM1. The monomeric form interacts with XIAP/BIRC4. Both the dimeric and monomeric form can interact with DIABLO/SMAC. Interacts with BIRC6/bruce. Interacts with FBXL7; this interaction facilitates the polyubiquitination and subsequent proteasomal degradation of BIRC5 by the SCF(FBXL7) E3 ubiquitin-protein ligase complex. Post-translationally, ubiquitinated by the Cul9-RING ubiquitin-protein ligase complex, leading to its degradation. Ubiquitination is required for centrosomal targeting. Deubiquitinated by USP35 or USP38; leading to stabilization. In terms of processing, acetylation at Lys-129 results in its homodimerization, while deacetylation promotes the formation of monomers which heterodimerize with XPO1/CRM1 which facilitates its nuclear export. The acetylated form represses STAT3 transactivation. The dynamic equilibrium between its acetylation and deacetylation at Lys-129 determines its interaction with XPO1/CRM1, its subsequent subcellular localization, and its ability to inhibit STAT3 transactivation. In vitro phosphorylation at Thr-117 by AURKB prevents interaction with INCENP and localization to mitotic chromosomes. Phosphorylation at Thr-48 by CK2 is critical for its mitotic and anti-apoptotic activities. Phosphorylation at Thr-34 by CDK15 is critical for its anti-apoptotic activity. Phosphorylation at Ser-20 by AURKC is critical for regulation of proper chromosome alignment and segregation, and possibly cytokinesis.

It is found in the cytoplasm. It localises to the nucleus. Its subcellular location is the chromosome. The protein localises to the centromere. The protein resides in the cytoskeleton. It is found in the spindle. It localises to the kinetochore. Its subcellular location is the midbody. Multitasking protein that has dual roles in promoting cell proliferation and preventing apoptosis. Component of a chromosome passage protein complex (CPC) which is essential for chromosome alignment and segregation during mitosis and cytokinesis. Acts as an important regulator of the localization of this complex; directs CPC movement to different locations from the inner centromere during prometaphase to midbody during cytokinesis and participates in the organization of the center spindle by associating with polymerized microtubules. Involved in the recruitment of CPC to centromeres during early mitosis via association with histone H3 phosphorylated at 'Thr-3' (H3pT3) during mitosis. The complex with RAN plays a role in mitotic spindle formation by serving as a physical scaffold to help deliver the RAN effector molecule TPX2 to microtubules. May counteract a default induction of apoptosis in G2/M phase. The acetylated form represses STAT3 transactivation of target gene promoters. May play a role in neoplasia. Inhibitor of CASP3 and CASP7. Essential for the maintenance of mitochondrial integrity and function. The sequence is that of Baculoviral IAP repeat-containing protein 5 (BIRC5) from Felis catus (Cat).